We begin with the raw amino-acid sequence, 390 residues long: MLSKRLFPYSNLFPRSRKYKFIVYFIICLTIIISALGVYLYSIPIVSPNQPQCDMVWMSPSYARIRAFDETHTKYASKYNLYLYREQDVDKMPNENENEDGNEGFTSLDGIPALFIHGNAGSFEQVRSIAARCSEMYYNDGRFKEKYPHARNIDFFTADFNEELSAFKGLRDQVEYVTQAISFIVDLYPQNPNRNIILIGHSMGGLVARIAASRQQHESNVDIILTLATPHSDPFPWLPKTSDFPDEVGLISIYSSVDLMVPPSVVTPKSKSDHFFSVDAAKLLGVPIDHQGIVWCGQLREKLSEALIGISGLNTLQDRMKVFKKIFSGDRKELGPTPIFGLAKLKLKLLQSWVHLLSLTIFALKWTIIVLAIIQLRKVYTKFNNPPPTH.

The helical transmembrane segment at 21 to 41 threads the bilayer; it reads FIVYFIICLTIIISALGVYLY. Residue Ser-202 is part of the active site. A helical transmembrane segment spans residues 354 to 374; that stretch reads VHLLSLTIFALKWTIIVLAII.

The protein belongs to the GPI inositol-deacylase family.

Its subcellular location is the endoplasmic reticulum membrane. Involved in inositol deacylation of GPI-anchored proteins which plays important roles in the quality control and ER-associated degradation of GPI-anchored proteins. The polypeptide is GPI inositol-deacylase (BST1) (Candida albicans (strain SC5314 / ATCC MYA-2876) (Yeast)).